A 159-amino-acid polypeptide reads, in one-letter code: SsrA-binding protein (159 aa).

Positions lysine 134–alanine 159 are disordered.

It belongs to the SmpB family.

It localises to the cytoplasm. Its function is as follows. Required for rescue of stalled ribosomes mediated by trans-translation. Binds to transfer-messenger RNA (tmRNA), required for stable association of tmRNA with ribosomes. tmRNA and SmpB together mimic tRNA shape, replacing the anticodon stem-loop with SmpB. tmRNA is encoded by the ssrA gene; the 2 termini fold to resemble tRNA(Ala) and it encodes a 'tag peptide', a short internal open reading frame. During trans-translation Ala-aminoacylated tmRNA acts like a tRNA, entering the A-site of stalled ribosomes, displacing the stalled mRNA. The ribosome then switches to translate the ORF on the tmRNA; the nascent peptide is terminated with the 'tag peptide' encoded by the tmRNA and targeted for degradation. The ribosome is freed to recommence translation, which seems to be the essential function of trans-translation. The chain is SsrA-binding protein from Marinomonas sp. (strain MWYL1).